Here is a 96-residue protein sequence, read N- to C-terminus: 10.9 kDa protein (96 aa).

The sequence is that of 10.9 kDa protein from Pseudomonas aeruginosa (Bacteriophage Pf1).